We begin with the raw amino-acid sequence, 602 residues long: Multicopper oxidase aurL2 (602 aa).

The first 17 residues, 1-17 (MLFRFLALLPFVAGAFA), serve as a signal peptide directing secretion. Plastocyanin-like domains follow at residues 38–149 (DIKI…VRDA) and 160–317 (IPLL…KYRC). N-linked (GlcNAc...) asparagine glycans are attached at residues asparagine 52 and asparagine 80. Cu cation-binding residues include histidine 84, histidine 86, histidine 130, and histidine 132. N-linked (GlcNAc...) asparagine glycosylation is found at asparagine 201, asparagine 247, asparagine 337, asparagine 383, asparagine 387, asparagine 419, and asparagine 424. Positions 421–556 (TTPNYTLALE…QVMGMATVWV (136 aa)) constitute a Plastocyanin-like 3 domain. Residue histidine 469 participates in Cu cation binding. N-linked (GlcNAc...) asparagine glycans are attached at residues asparagine 482 and asparagine 486.

The protein belongs to the multicopper oxidase family.

It functions in the pathway pigment biosynthesis. Multicopper oxidase; part of the gene cluster that mediates the biosynthesis of aurofusarin, a red mycelium pigment which is acting as a mycotoxin. The first step is performed by the polyketide synthase which condenses one acetyl-CoA and 6 malonyl-CoA units to form the first intermediate, the cyclic heptaketide and yellow pigment YWA1. The C2 hydroxyl group in the pyrone ring of YWA1 is probably formed during ring closure by an aldol-type cyclization reaction. The dehydratase aurZ then acts as the first tailoring enzyme in the aurofusarin biosynthetic pathway by converting YWA1 to nor-rubrofusarin. Nor-rubrofusarin is then methylated to rubrofusarin by the O-methyltransferase aurJ. Rubrofusarin is then transported across the plasma membrane by the rubrofusarin-specific pump aurT for further enzymatic processing by the extracellular complex composed of GIP1, aurF, aurO and aurS to yield aurofusarin. The polypeptide is Multicopper oxidase aurL2 (aurL2) (Gibberella zeae (strain ATCC MYA-4620 / CBS 123657 / FGSC 9075 / NRRL 31084 / PH-1) (Wheat head blight fungus)).